We begin with the raw amino-acid sequence, 435 residues long: Serine--tRNA ligase (435 aa).

Residues 41 to 70 (QVKTEELQAQRNSRSKSIGQAKAKGDHEEA) form a disordered region. Residues 49 to 58 (AQRNSRSKSI) are compositionally biased toward polar residues. 242–244 (TAE) serves as a coordination point for L-serine. 273 to 275 (RSE) provides a ligand contact to ATP. Position 296 (E296) interacts with L-serine. 360–363 (EISS) contributes to the ATP binding site. S396 lines the L-serine pocket.

It belongs to the class-II aminoacyl-tRNA synthetase family. Type-1 seryl-tRNA synthetase subfamily. In terms of assembly, homodimer. The tRNA molecule binds across the dimer.

It localises to the cytoplasm. It carries out the reaction tRNA(Ser) + L-serine + ATP = L-seryl-tRNA(Ser) + AMP + diphosphate + H(+). The catalysed reaction is tRNA(Sec) + L-serine + ATP = L-seryl-tRNA(Sec) + AMP + diphosphate + H(+). It functions in the pathway aminoacyl-tRNA biosynthesis; selenocysteinyl-tRNA(Sec) biosynthesis; L-seryl-tRNA(Sec) from L-serine and tRNA(Sec): step 1/1. Catalyzes the attachment of serine to tRNA(Ser). Is also able to aminoacylate tRNA(Sec) with serine, to form the misacylated tRNA L-seryl-tRNA(Sec), which will be further converted into selenocysteinyl-tRNA(Sec). This chain is Serine--tRNA ligase, found in Aliivibrio fischeri (strain MJ11) (Vibrio fischeri).